Consider the following 101-residue polypeptide: Large ribosomal subunit protein uL24 (101 aa).

Belongs to the universal ribosomal protein uL24 family. Part of the 50S ribosomal subunit.

Its function is as follows. One of two assembly initiator proteins, it binds directly to the 5'-end of the 23S rRNA, where it nucleates assembly of the 50S subunit. One of the proteins that surrounds the polypeptide exit tunnel on the outside of the subunit. The sequence is that of Large ribosomal subunit protein uL24 from Streptococcus pneumoniae (strain ATCC 700669 / Spain 23F-1).